Reading from the N-terminus, the 294-residue chain is 33 kDa chaperonin (294 aa).

2 cysteine pairs are disulfide-bonded: C231–C233 and C264–C267.

Belongs to the HSP33 family. Under oxidizing conditions two disulfide bonds are formed involving the reactive cysteines. Under reducing conditions zinc is bound to the reactive cysteines and the protein is inactive.

Its subcellular location is the cytoplasm. Functionally, redox regulated molecular chaperone. Protects both thermally unfolding and oxidatively damaged proteins from irreversible aggregation. Plays an important role in the bacterial defense system toward oxidative stress. This Aeromonas salmonicida (strain A449) protein is 33 kDa chaperonin.